Here is an 84-residue protein sequence, read N- to C-terminus: Metallothionein-like protein 2C (84 aa).

Belongs to the metallothionein superfamily. Type 15 family.

It localises to the cytoplasm. The protein localises to the cytosol. Its function is as follows. Metallothioneins have a high content of cysteine residues that bind various heavy metals. Acts as a reactive oxygen species (ROS) scavenger in the cytosol. Possesses superoxide anion and hydroxyl radical scavenging activities in vitro. Plays a role during root development, lateral root initiation and seed embryo germination, possibly by regulating levels of cytokinin. The chain is Metallothionein-like protein 2C (MT2C) from Oryza sativa subsp. indica (Rice).